The following is a 260-amino-acid chain: UPF0246 protein Bphyt_1375 (260 aa).

This sequence belongs to the UPF0246 family.

The sequence is that of UPF0246 protein Bphyt_1375 from Paraburkholderia phytofirmans (strain DSM 17436 / LMG 22146 / PsJN) (Burkholderia phytofirmans).